Reading from the N-terminus, the 112-residue chain is Nucleoid-associated protein FTF0810c (112 aa).

The tract at residues M1 to E27 is disordered. Positions E17 to E27 are enriched in basic and acidic residues.

Belongs to the YbaB/EbfC family. Homodimer.

It is found in the cytoplasm. Its subcellular location is the nucleoid. Its function is as follows. Binds to DNA and alters its conformation. May be involved in regulation of gene expression, nucleoid organization and DNA protection. The polypeptide is Nucleoid-associated protein FTF0810c (Francisella tularensis subsp. tularensis (strain FSC 198)).